The sequence spans 147 residues: Large ribosomal subunit protein uL16 (147 aa).

The protein belongs to the universal ribosomal protein uL16 family. Part of the 50S ribosomal subunit.

In terms of biological role, binds 23S rRNA and is also seen to make contacts with the A and possibly P site tRNAs. In Clostridium acetobutylicum (strain ATCC 824 / DSM 792 / JCM 1419 / IAM 19013 / LMG 5710 / NBRC 13948 / NRRL B-527 / VKM B-1787 / 2291 / W), this protein is Large ribosomal subunit protein uL16.